A 500-amino-acid polypeptide reads, in one-letter code: Nitrate/nitrite transporter NrtP (500 aa).

12 helical membrane passes run 19-39, 52-72, 79-99, 109-129, 147-167, 175-195, 220-240, 247-267, 364-384, 389-409, 425-445, and 451-471; these read WFAFFLTFVCWFNFAPFATTI, TLGICNLALTIPARLIIGMLL, ITYSILLMFAVVPCLATALAQ, LLMGIVGSGFVVGIRMVAEWF, FGAFGAEFALPILAISTSFFS, LAIALVGIITAIYGVIYYNTV, SFWAMMISNFGLIFALGLLAW, IHFLTLSQMYLTWLVLAGLFA, WTMTIISVGIGVSYLMAHFIN, IPVAIAVTMFAAYFAQAGCGA, IAGNVGAYGNFGGVVYLTIFS, and TLFSTMGIAALICAFMCAFFL.

This sequence belongs to the major facilitator superfamily. Nitrate/nitrite porter (TC 2.A.1.8) family.

It is found in the cell inner membrane. Its function is as follows. Transport system for both nitrate and nitrite, with much higher affinity for nitrate than for nitrite. This Nostoc punctiforme (strain ATCC 29133 / PCC 73102) protein is Nitrate/nitrite transporter NrtP.